We begin with the raw amino-acid sequence, 281 residues long: CDAN1-interacting nuclease 1 (281 aa).

It localises to the nucleus. It is found in the cytoplasm. Its function is as follows. Plays a role in erythroid cell differentiation. The polypeptide is CDAN1-interacting nuclease 1 (CDIN1) (Bos taurus (Bovine)).